The primary structure comprises 28 residues: Peptide 2 (28 aa).

The protein belongs to the short scorpion toxin superfamily. Potassium channel inhibitor family. Alpha-KTx 09 subfamily. In terms of tissue distribution, expressed by the venom gland.

Its subcellular location is the secreted. In terms of biological role, blocks potassium channels. The chain is Peptide 2 from Hottentotta tamulus sindicus (Scorpion).